The chain runs to 772 residues: PDZ domain-containing protein 4 (772 aa).

In terms of domain architecture, PDZ spans 136–221 (EVELCKNSHQ…NISLLVARPE (86 aa)). Positions 239–320 (DFGSENEGDL…TNTPGSLRKF (82 aa)) are disordered. Serine 242 bears the Phosphoserine mark. Over residues 287 to 303 (RTDESTRNEESSEHDLL) the composition is skewed to basic and acidic residues. Residues 394-424 (VNRNESLGHEMAMLEEELRHLEFKCRNILRA) adopt a coiled-coil conformation. Residues 450-573 (ASEPKKHELS…VGPEGSPYLS (124 aa)) are disordered. A compositionally biased stretch (basic and acidic residues) spans 452-472 (EPKKHELSDISELPEKSDKDS). Serine 459 is subject to Phosphoserine. Composition is skewed to polar residues over residues 473–484 (TSAYNTGESCRS) and 502–511 (AGNSNLNRTP). The span at 535–552 (LSRDPEVGRRQHTEERVR) shows a compositional bias: basic and acidic residues.

Its subcellular location is the cytoplasm. It is found in the cell cortex. This is PDZ domain-containing protein 4 (Pdzd4) from Mus musculus (Mouse).